The primary structure comprises 445 residues: Enolase 1 (445 aa).

The substrate site is built by His-164 and Glu-173. Glu-216 acts as the Proton donor in catalysis. Mg(2+) contacts are provided by Asp-251, Glu-301, and Asp-328. Glu-301 and Asp-328 together coordinate substrate. The active-site Proton acceptor is the Lys-353. Substrate-binding positions include Ser-380–Ser-383 and Lys-404.

Belongs to the enolase family. Homodimer. It depends on Mg(2+) as a cofactor.

It is found in the cytoplasm. The enzyme catalyses (2R)-2-phosphoglycerate = phosphoenolpyruvate + H2O. It functions in the pathway carbohydrate degradation; glycolysis; pyruvate from D-glyceraldehyde 3-phosphate: step 4/5. This chain is Enolase 1 (ENO1), found in Hevea brasiliensis (Para rubber tree).